We begin with the raw amino-acid sequence, 232 residues long: Flagellar L-ring protein (232 aa).

The first 21 residues, 1 to 21 (MQKNAAHTYAISSLLVLSLTG), serve as a signal peptide directing secretion. Cys22 carries N-palmitoyl cysteine lipidation. Residue Cys22 is the site of S-diacylglycerol cysteine attachment.

This sequence belongs to the FlgH family. As to quaternary structure, the basal body constitutes a major portion of the flagellar organelle and consists of four rings (L,P,S, and M) mounted on a central rod.

Its subcellular location is the cell outer membrane. The protein resides in the bacterial flagellum basal body. Its function is as follows. Assembles around the rod to form the L-ring and probably protects the motor/basal body from shearing forces during rotation. The protein is Flagellar L-ring protein of Escherichia coli O6:H1 (strain CFT073 / ATCC 700928 / UPEC).